We begin with the raw amino-acid sequence, 290 residues long: Iron-sulfur cluster carrier protein (290 aa).

47–54 (GKGGVGKS) is an ATP binding site.

The protein belongs to the Mrp/NBP35 ATP-binding proteins family. In terms of assembly, homodimer.

Binds and transfers iron-sulfur (Fe-S) clusters to target apoproteins. Can hydrolyze ATP. This chain is Iron-sulfur cluster carrier protein, found in Methanocaldococcus jannaschii (strain ATCC 43067 / DSM 2661 / JAL-1 / JCM 10045 / NBRC 100440) (Methanococcus jannaschii).